Reading from the N-terminus, the 540-residue chain is Solute carrier family 2, facilitated glucose transporter member 9 (540 aa).

The interval 1 to 31 is disordered; sequence MARKQNRNSKELGLVPLTDDTSHAGPPGPGR. Over 1–51 the chain is Cytoplasmic; that stretch reads MARKQNRNSKELGLVPLTDDTSHAGPPGPGRALLECDHLRSGVPGGRRRKD. Residue serine 9 is modified to Phosphoserine. Residues 52 to 72 traverse the membrane as a helical segment; that stretch reads WSCSLLVASLAGAFGSSFLYG. The Extracellular segment spans residues 73–107; it reads YNLSVVNAPTPYIKAFYNESWERRHGRPIDPDTLT. N-linked (GlcNAc...) asparagine glycosylation occurs at asparagine 90. A helical membrane pass occupies residues 108-128; that stretch reads LLWSVTVSIFAIGGLVGTLIV. Topologically, residues 129–140 are cytoplasmic; it reads KMIGKVLGRKHT. Residues 141–161 traverse the membrane as a helical segment; sequence LLANNGFAISAALLMACSLQA. The Extracellular portion of the chain corresponds to 162–171; it reads GAFEMLIVGR. Residues 172-192 traverse the membrane as a helical segment; the sequence is FIMGIDGGVALSVLPMYLSEI. Residues 193-200 are Cytoplasmic-facing; the sequence is SPKEIRGS. Residues 201 to 221 traverse the membrane as a helical segment; sequence LGQVTAIFICIGVFTGQLLGL. Residues 222 to 231 lie on the Extracellular side of the membrane; sequence PELLGKESTW. A helical transmembrane segment spans residues 232–252; sequence PYLFGVIVVPAVVQLLSLPFL. Residues 253 to 316 are Cytoplasmic-facing; that stretch reads PDSPRYLLLE…LLRAPYVRWQ (64 aa). A helical membrane pass occupies residues 317–337; it reads VVTVIVTMACYQLCGLNAIWF. The Extracellular portion of the chain corresponds to 338-354; sequence YTNSIFGKAGIPPAKIP. Residues 355-375 traverse the membrane as a helical segment; sequence YVTLSTGGIETLAAVFSGLVI. Residues 376–381 lie on the Cytoplasmic side of the membrane; the sequence is EHLGRR. A helical transmembrane segment spans residues 382 to 402; the sequence is PLLIGGFGLMGLFFGTLTITL. At 403–415 the chain is on the extracellular side; the sequence is TLQDHAPWVPYLS. A helical membrane pass occupies residues 416 to 436; it reads IVGILAIIASFCSGPGGIPFI. Residues 437–451 lie on the Cytoplasmic side of the membrane; that stretch reads LTGEFFQQSQRPAAF. A helical transmembrane segment spans residues 452 to 472; it reads IIAGTVNWLSNFAVGLLFPFI. Topologically, residues 473–478 are extracellular; sequence QKSLDT. Residues 479-499 form a helical membrane-spanning segment; the sequence is YCFLVFATICITGAIYLYFVL. The Cytoplasmic portion of the chain corresponds to 500 to 540; that stretch reads PETKNRTYAEISQAFSKRNKAYPPEEKIDSAVTDGKINGRP. Serine 515 carries the post-translational modification Phosphoserine. Positions 519–540 are disordered; the sequence is KAYPPEEKIDSAVTDGKINGRP.

Belongs to the major facilitator superfamily. Sugar transporter (TC 2.A.1.1) family. Glucose transporter subfamily. Most strongly expressed in basolateral membranes of proximal renal tubular cells, liver and placenta. Also detected in lung, blood leukocytes, heart skeletal muscle and chondrocytes from articular cartilage. Detected in kidney membrane (at protein level). As to expression, only detected in the apical membranes of polarized renal tubular cells and placenta. Detected in kidney membrane (at protein level).

The protein resides in the cell membrane. The protein localises to the basolateral cell membrane. It is found in the apical cell membrane. It catalyses the reaction urate(out) = urate(in). Its activity is regulated as follows. Extracellular glucose and urate accelerate urate efflux. Intracellular urate, glucose and fructose accelerate urate influx. No effect of extracellular urate, glucose or fructose on urate efflux. Intracellular urate and fructose slightly accelerate urate influx. In terms of biological role, high-capacity urate transporter, which may play a role in the urate reabsorption by proximal tubules. May have a residual high-affinity, low-capacity glucose and fructose transporter activity. Transports urate at rates 45- to 60-fold faster than glucose. Does not transport galactose. May mediate small uptake of adenine but not of other nucleobases. This is Solute carrier family 2, facilitated glucose transporter member 9 from Homo sapiens (Human).